The chain runs to 457 residues: BAG family molecular chaperone regulator 4 (457 aa).

Residues 1 to 20 are compositionally biased toward low complexity; the sequence is MSALRRSGYGPSDGPSYGRY. Positions 1–104 are disordered; that stretch reads MSALRRSGYG…PYPGYNSNYW (104 aa). At serine 7 the chain carries Phosphoserine. Residues 31 to 48 are compositionally biased toward pro residues; it reads HVPPPLYPPLRPEPPQPP. 4 positions are modified to omega-N-methylarginine: arginine 41, arginine 54, arginine 108, and arginine 185. Disordered regions lie at residues 128-335 and 348-374; these read LNSY…SDLL and YGNA…SSDE. Positions 160–193 are enriched in polar residues; that stretch reads YTQSNYSTEVPNTYRSPGNSPTPMSRWMYSQQDC. Residues 255 to 268 are compositionally biased toward low complexity; the sequence is PWPSAAPSAPSAGS. Residues 284-295 show a composition bias toward pro residues; sequence PQPPPSPPPQQP. Polar residues-rich tracts occupy residues 326–335 and 348–365; these read AVNNDNSDLL and YGNA…SNNL. Positions 379–456 constitute a BAG domain; the sequence is SIKKIIHVLE…AILEKLEKKG (78 aa).

Binds to the ATPase domain of HSP/HSC70 chaperones. Binds to the death domain of TNFRSF12. Binds to the death domain of TNFRSF1A in the absence of TNF and thereby prevents binding of adapter molecules such as TRADD or TRAF2. Interacts with PRKN.

The protein resides in the cytoplasm. In terms of biological role, inhibits the chaperone activity of HSP70/HSC70 by promoting substrate release. Prevents constitutive TNFRSF1A signaling. Negative regulator of PRKN translocation to damaged mitochondria. The sequence is that of BAG family molecular chaperone regulator 4 (Bag4) from Mus musculus (Mouse).